The chain runs to 327 residues: MKAPVRVAVTGAAGQIGYSLLFRIAAGEMLGKDQPVILQLLEIPQAMKALEGVVMELEDCAFPLLAGLEATDDPKVAFKDADYALLVGAAPRKAGMERRDLLQVNGKIFTEQGRALAEVAKKDVKVLVVGNPANTNALIAYKNAPGLNPRNFTAMTRLDHNRAKAQLAKKTGTGVDRIRRMTVWGNHSSTMFPDLFHAEVDGRPALELVDMEWYEKVFIPTVAQRGAAIIQARGASSAASAANAAIEHIRDWALGTPEGDWVSMAVPSQGEYGIPEGIVYSFPVTAKDGAYRVVEGLEINEFARKRMEITAQELLDEMEQVKALGLI.

NAD(+) is bound at residue 11 to 17 (GAAGQIG). Residues Arg92 and Arg98 each contribute to the substrate site. NAD(+) contacts are provided by residues Asn105, Gln112, and 129–131 (VGN). Asn131 and Arg162 together coordinate substrate. The active-site Proton acceptor is His187.

Belongs to the LDH/MDH superfamily. MDH type 2 family.

It catalyses the reaction (S)-malate + NAD(+) = oxaloacetate + NADH + H(+). In terms of biological role, catalyzes the reversible oxidation of malate to oxaloacetate. In Thermus thermophilus (strain ATCC BAA-163 / DSM 7039 / HB27), this protein is Malate dehydrogenase.